The following is a 152-amino-acid chain: Small ribosomal subunit protein bS16 (152 aa).

The span at 118 to 130 (AEKHKAKASEKKA) shows a compositional bias: basic and acidic residues. Residues 118 to 152 (AEKHKAKASEKKAAAAASADEAGSAAADDAEGSES) are disordered. Positions 131-144 (AAAASADEAGSAAA) are enriched in low complexity.

This sequence belongs to the bacterial ribosomal protein bS16 family.

The protein is Small ribosomal subunit protein bS16 of Beutenbergia cavernae (strain ATCC BAA-8 / DSM 12333 / CCUG 43141 / JCM 11478 / NBRC 16432 / NCIMB 13614 / HKI 0122).